We begin with the raw amino-acid sequence, 218 residues long: Cell division protein SepF (218 aa).

A disordered region spans residues 24-115; sequence EDVTASTDNV…IANRREQYQQ (92 aa). Polar residues predominate over residues 28–43; it reads ASTDNVIPRSQQSVRA. Positions 47–63 are enriched in basic and acidic residues; the sequence is PKQEPRNNHVQQDHQAR.

Belongs to the SepF family. In terms of assembly, homodimer. Interacts with FtsZ.

The protein localises to the cytoplasm. Cell division protein that is part of the divisome complex and is recruited early to the Z-ring. Probably stimulates Z-ring formation, perhaps through the cross-linking of FtsZ protofilaments. Its function overlaps with FtsA. The polypeptide is Cell division protein SepF (Streptococcus pyogenes serotype M4 (strain MGAS10750)).